Reading from the N-terminus, the 339-residue chain is Cobalt-precorrin-5B C(1)-methyltransferase (339 aa).

It belongs to the CbiD family.

It catalyses the reaction Co-precorrin-5B + S-adenosyl-L-methionine = Co-precorrin-6A + S-adenosyl-L-homocysteine. It participates in cofactor biosynthesis; adenosylcobalamin biosynthesis; cob(II)yrinate a,c-diamide from sirohydrochlorin (anaerobic route): step 6/10. In terms of biological role, catalyzes the methylation of C-1 in cobalt-precorrin-5B to form cobalt-precorrin-6A. The polypeptide is Cobalt-precorrin-5B C(1)-methyltransferase (Methanosarcina acetivorans (strain ATCC 35395 / DSM 2834 / JCM 12185 / C2A)).